Here is a 248-residue protein sequence, read N- to C-terminus: UPF0736 protein BCAH187_A1335 (248 aa).

Belongs to the UPF0736 family.

The polypeptide is UPF0736 protein BCAH187_A1335 (Bacillus cereus (strain AH187)).